The sequence spans 176 residues: Sperm-egg fusion protein TMEM95 (176 aa).

The N-terminal stretch at 1–16 (MWVLALGGAFLAVAKA) is a signal peptide. Cystine bridges form between C17/C119, C20/C122, C106/C129, and C110/C135. The Extracellular segment spans residues 17–146 (CIFCRLQDHA…PDSHDLWDAR (130 aa)). Residues N36 and N118 are each glycosylated (N-linked (GlcNAc...) asparagine). The chain crosses the membrane as a helical span at residues 147–167 (ILLLCIFGIVLLSGVVSLQVE). Residues 168-176 (YLNLQAKDL) lie on the Cytoplasmic side of the membrane.

It belongs to the TMEM95 family. In terms of assembly, does not interact with sperm-egg fusion proteins IZUMO1 or IZUMO1R/JUNO. In terms of processing, N-glycosylated. As to expression, expressed exclusively in testis.

The protein localises to the cytoplasmic vesicle. It localises to the secretory vesicle. The protein resides in the acrosome membrane. In terms of biological role, sperm protein required for fusion of sperm with the egg membrane during fertilization. This is Sperm-egg fusion protein TMEM95 from Mus musculus (Mouse).